Consider the following 89-residue polypeptide: MSKKCALTGRKPRRGYSYAIRGISKKKKGIGLKVTGRTKRRFLPNMMTKRLWSTEENRFLKLKISAAALRLVDKLGLDKVVARAKSKGF.

Belongs to the bacterial ribosomal protein bL28 family.

The sequence is that of Large ribosomal subunit protein bL28 from Chlamydia muridarum (strain MoPn / Nigg).